A 291-amino-acid polypeptide reads, in one-letter code: Verruculogen synthase (291 aa).

Tyr68 is an active-site residue.

The protein belongs to the PhyH family. Homodimer. Requires Fe cation as cofactor.

It carries out the reaction fumitremorgin B + 2-oxoglutarate + AH2 + 2 O2 = verruculogen + succinate + A + CO2 + H2O. The protein operates within mycotoxin biosynthesis. Functionally, verruculogen synthase; part of the gene cluster that mediates the biosynthesis of fumitremorgins, indole alkaloids that carry not only intriguing chemical structures, but also interesting biological and pharmacological activities. The biosynthesis of fumitremorgin-type alkaloids begins by condensation of the two amino acids L-tryptophan and L-proline to brevianamide F, catalyzed by the non-ribosomal peptide synthetase ftmA. Brevianamide F is then prenylated by the prenyltransferase ftmPT1/ftmB in the presence of dimethylallyl diphosphate, resulting in the formation of tryprostatin B. The three cytochrome P450 monooxygenases, ftmP450-1/ftmC, ftmP450-2/ftmE and ftmP450-3/FtmG, are responsible for the conversion of tryprostatin B to 6-hydroxytryprostatin B, tryprostatin A to fumitremorgin C and fumitremorgin C to 12,13-dihydroxyfumitremorgin C, respectively. The putative methyltransferase ftmMT/ftmD is expected for the conversion of 6-hydroxytryprostatin B to tryprostatin A. FtmPT2/FtmH catalyzes the prenylation of 12,13-dihydroxyfumitre-morgin C in the presence of dimethylallyl diphosphate, resulting in the formation of fumitremorgin B. Fumitremorgin B is further converted to verruculogen by ftmOx1/ftmF via the insertion of an endoperoxide bond between the two prenyl moieties. In some fungal species, verruculogen is further converted to fumitremorgin A, but the enzymes involved in this step have not been identified yet. The chain is Verruculogen synthase from Aspergillus fumigatus (Neosartorya fumigata).